A 258-amino-acid chain; its full sequence is Dihydroorotate dehydrogenase B (NAD(+)), electron transfer subunit (258 aa).

An FAD-binding FR-type domain is found at 1 to 101 (MKKAYLTVVS…LGPLGNGYDP (101 aa)). Residues 52 to 55 (RPIS), 69 to 71 (IYR), and 76 to 77 (GT) each bind FAD. [2Fe-2S] cluster-binding residues include cysteine 220, cysteine 225, cysteine 228, and cysteine 243.

Belongs to the PyrK family. Heterotetramer of 2 PyrK and 2 PyrD type B subunits. [2Fe-2S] cluster serves as cofactor. The cofactor is FAD.

It functions in the pathway pyrimidine metabolism; UMP biosynthesis via de novo pathway; orotate from (S)-dihydroorotate (NAD(+) route): step 1/1. Functionally, responsible for channeling the electrons from the oxidation of dihydroorotate from the FMN redox center in the PyrD type B subunit to the ultimate electron acceptor NAD(+). The polypeptide is Dihydroorotate dehydrogenase B (NAD(+)), electron transfer subunit (Bacillus pumilus (strain SAFR-032)).